A 61-amino-acid chain; its full sequence is Putative defensin-like protein 72 (61 aa).

4 disulfides stabilise this stretch: Cys-21–Cys-59, Cys-25–Cys-48, Cys-34–Cys-57, and Cys-38–Cys-58.

It belongs to the DEFL family.

This is Putative defensin-like protein 72 from Arabidopsis thaliana (Mouse-ear cress).